The primary structure comprises 364 residues: DNA replication and repair protein RecF (364 aa).

30 to 37 (GNNAQGKT) lines the ATP pocket.

It belongs to the RecF family.

The protein resides in the cytoplasm. The RecF protein is involved in DNA metabolism; it is required for DNA replication and normal SOS inducibility. RecF binds preferentially to single-stranded, linear DNA. It also seems to bind ATP. This is DNA replication and repair protein RecF from Streptococcus uberis (strain ATCC BAA-854 / 0140J).